Here is a 456-residue protein sequence, read N- to C-terminus: tRNA modification GTPase MnmE (456 aa).

Residues Arg-24, Glu-81, and Lys-120 each contribute to the (6S)-5-formyl-5,6,7,8-tetrahydrofolate site. The region spanning 216-379 is the TrmE-type G domain; it reads GMTVVIAGRP…LREHLKACMG (164 aa). Asn-226 provides a ligand contact to K(+). GTP is bound by residues 226–231, 245–251, 270–273, 335–338, and 359–361; these read NAGKSS, TEIAGTT, DTAG, NKAD, and SAR. Ser-230 is a Mg(2+) binding site. K(+) is bound by residues Thr-245, Ile-247, and Thr-250. Position 251 (Thr-251) interacts with Mg(2+). Lys-456 is a (6S)-5-formyl-5,6,7,8-tetrahydrofolate binding site.

It belongs to the TRAFAC class TrmE-Era-EngA-EngB-Septin-like GTPase superfamily. TrmE GTPase family. As to quaternary structure, homodimer. Heterotetramer of two MnmE and two MnmG subunits. The cofactor is K(+).

It is found in the cytoplasm. Functionally, exhibits a very high intrinsic GTPase hydrolysis rate. Involved in the addition of a carboxymethylaminomethyl (cmnm) group at the wobble position (U34) of certain tRNAs, forming tRNA-cmnm(5)s(2)U34. This chain is tRNA modification GTPase MnmE, found in Pseudomonas syringae pv. tomato (strain ATCC BAA-871 / DC3000).